The chain runs to 111 residues: MKKSYRVKKEKDFKALFDAGHSVANRKFVVYCLDRNLPHFRVGLSVSKHLGNAVTRNRVKRRLRHALMDMSSQLEHQDFVVIARKGVEDLSYQDIYSNLVHVLKIAKLYKD.

It belongs to the RnpA family. In terms of assembly, consists of a catalytic RNA component (M1 or rnpB) and a protein subunit.

The enzyme catalyses Endonucleolytic cleavage of RNA, removing 5'-extranucleotides from tRNA precursor.. RNaseP catalyzes the removal of the 5'-leader sequence from pre-tRNA to produce the mature 5'-terminus. It can also cleave other RNA substrates such as 4.5S RNA. The protein component plays an auxiliary but essential role in vivo by binding to the 5'-leader sequence and broadening the substrate specificity of the ribozyme. In Streptococcus thermophilus (strain CNRZ 1066), this protein is Ribonuclease P protein component.